Reading from the N-terminus, the 376-residue chain is UDP-N-acetylglucosamine--N-acetylmuramyl-(pentapeptide) pyrophosphoryl-undecaprenol N-acetylglucosamine transferase (376 aa).

UDP-N-acetyl-alpha-D-glucosamine contacts are provided by residues 11–13 (TGG), Asn-117, Arg-160, Ser-208, and Gln-310.

This sequence belongs to the glycosyltransferase 28 family. MurG subfamily.

It localises to the cell inner membrane. It catalyses the reaction di-trans,octa-cis-undecaprenyl diphospho-N-acetyl-alpha-D-muramoyl-L-alanyl-D-glutamyl-meso-2,6-diaminopimeloyl-D-alanyl-D-alanine + UDP-N-acetyl-alpha-D-glucosamine = di-trans,octa-cis-undecaprenyl diphospho-[N-acetyl-alpha-D-glucosaminyl-(1-&gt;4)]-N-acetyl-alpha-D-muramoyl-L-alanyl-D-glutamyl-meso-2,6-diaminopimeloyl-D-alanyl-D-alanine + UDP + H(+). Its pathway is cell wall biogenesis; peptidoglycan biosynthesis. Cell wall formation. Catalyzes the transfer of a GlcNAc subunit on undecaprenyl-pyrophosphoryl-MurNAc-pentapeptide (lipid intermediate I) to form undecaprenyl-pyrophosphoryl-MurNAc-(pentapeptide)GlcNAc (lipid intermediate II). The sequence is that of UDP-N-acetylglucosamine--N-acetylmuramyl-(pentapeptide) pyrophosphoryl-undecaprenol N-acetylglucosamine transferase from Rickettsia conorii (strain ATCC VR-613 / Malish 7).